Consider the following 297-residue polypeptide: ATP synthase subunit a (297 aa).

The next 8 membrane-spanning stretches (helical) occupy residues 38–58, 77–97, 107–127, 133–153, 174–194, 202–222, 230–250, and 252–272; these read PLIP…IAIL, GYVL…VDLL, LFII…VGGI, SSTV…IMGV, TIPL…LLSI, VLAG…FFTL, VGLV…HVYF, and ILVS…YWSQ.

This sequence belongs to the ATPase A chain family. In terms of assembly, F-type ATPases have 2 components, CF(1) - the catalytic core - and CF(0) - the membrane proton channel. CF(1) has five subunits: alpha(3), beta(3), gamma(1), delta(1), epsilon(1). CF(0) has three main subunits: a(1), b(2) and c(9-12). The alpha and beta chains form an alternating ring which encloses part of the gamma chain. CF(1) is attached to CF(0) by a central stalk formed by the gamma and epsilon chains, while a peripheral stalk is formed by the delta and b chains.

The protein resides in the cell membrane. In terms of biological role, key component of the proton channel; it plays a direct role in the translocation of protons across the membrane. This Mycoplasmoides gallisepticum (strain R(low / passage 15 / clone 2)) (Mycoplasma gallisepticum) protein is ATP synthase subunit a.